The sequence spans 337 residues: Secreted effector protein EspF(U) (337 aa).

Tandem repeats lie at residues 96-142 (IKPA…AEHG), 143-189 (IQPA…AEHG), 190-236 (IQPA…AEHG), 237-283 (IQPA…AEHG), and 284-330 (IQPA…AEHG). The 5 X 48 AA approximate tandem repeats stretch occupies residues 96–330 (IKPARSMAEH…RLMQHLAEHG (235 aa)). Positions 291–312 (AEHIPPAPNWPAPTPPVQNEQS) are disordered. Pro residues predominate over residues 295–306 (PPAPNWPAPTPP).

It belongs to the EspF(U)/TccP family. In terms of assembly, interacts with host BAIAP2 and host WASL/N-WASP. Can also interact with host proteins BAIAP2L1 and WAS/WASP.

It localises to the secreted. The protein localises to the host cytoplasm. In terms of biological role, required for efficient pedestal formation in host epithelial cells during infection. Acts as an intermediate between Tir (via host BAIAP2) and host WASL/N-WASP. Directly binds and activates WASL/N-WASP, which stimulates actin polymerization and leads to the formation of actin pedestals at the sites of bacterial adhesion. In Escherichia coli O157:H7, this protein is Secreted effector protein EspF(U) (espF(U)).